Here is a 721-residue protein sequence, read N- to C-terminus: Mitogen-activated protein kinase 6 (721 aa).

Methionine 1 participates in a covalent cross-link: Peptide (Met-Gly) (interchain with G-Cter in ubiquitin). One can recognise a Protein kinase domain in the interval tyrosine 20–methionine 316. Residues leucine 26–valine 34 and lysine 49 each bind ATP. Aspartate 152 (proton acceptor) is an active-site residue. Serine 189 bears the Phosphoserine; by PAK1, PAK2 and PAK3 mark. Positions serine 189 to glycine 191 match the SEG motif motif. Residues phenylalanine 332–glutamate 337 carry the FRIEDE motif motif. A phosphoserine mark is found at serine 386, serine 452, serine 556, serine 558, serine 665, and serine 684. Residues alanine 701–serine 715 are compositionally biased toward polar residues. The interval alanine 701–asparagine 721 is disordered.

It belongs to the protein kinase superfamily. CMGC Ser/Thr protein kinase family. MAP kinase subfamily. In terms of assembly, heterodimer with ERK4/MAPK4. Interacts with (via FRIEDE motif) MAPKAPK5. Interacts with UBE3A; this interaction may be indirect and mediated by HERC2, possibly via HERC2 interaction with NEURL4. Mg(2+) serves as cofactor. Phosphorylated at Ser-189 by PAK1, PAK2 and PAK3 resulting in catalytic activation. Phosphorylated by MAPKAPK5 at other sites. Post-translationally, ubiquitination at Met-1 leads to degradation by the proteasome pathway.

It is found in the cytoplasm. The protein resides in the nucleus. The enzyme catalyses L-seryl-[protein] + ATP = O-phospho-L-seryl-[protein] + ADP + H(+). It carries out the reaction L-threonyl-[protein] + ATP = O-phospho-L-threonyl-[protein] + ADP + H(+). Its activity is regulated as follows. Activated by phosphorylation at Ser-189. Atypical MAPK protein. Phosphorylates microtubule-associated protein 2 (MAP2) and MAPKAPK5. The precise role of the complex formed with MAPKAPK5 is still unclear, but the complex follows a complex set of phosphorylation events: upon interaction with atypical MAPKAPK5, ERK3/MAPK6 is phosphorylated at Ser-189 and then mediates phosphorylation and activation of MAPKAPK5, which in turn phosphorylates ERK3/MAPK6. May promote entry in the cell cycle. This is Mitogen-activated protein kinase 6 (MAPK6) from Pongo abelii (Sumatran orangutan).